We begin with the raw amino-acid sequence, 297 residues long: Methionyl-tRNA formyltransferase (297 aa).

The disordered stretch occupies residues 31 to 52; the sequence is QPPRAAGRGQKPRPSPVHRAAE. A (6S)-5,6,7,8-tetrahydrofolate-binding site is contributed by 108-111; it reads SLLP.

Belongs to the Fmt family.

It catalyses the reaction L-methionyl-tRNA(fMet) + (6R)-10-formyltetrahydrofolate = N-formyl-L-methionyl-tRNA(fMet) + (6S)-5,6,7,8-tetrahydrofolate + H(+). Attaches a formyl group to the free amino group of methionyl-tRNA(fMet). The formyl group appears to play a dual role in the initiator identity of N-formylmethionyl-tRNA by promoting its recognition by IF2 and preventing the misappropriation of this tRNA by the elongation apparatus. The sequence is that of Methionyl-tRNA formyltransferase from Paracoccus denitrificans (strain Pd 1222).